We begin with the raw amino-acid sequence, 63 residues long: Cecropin-A1 (63 aa).

A signal peptide spans 1 to 23 (MKFYNIFVFVALILAITIGQSEA). R62 bears the Arginine amide mark.

It belongs to the cecropin family.

Its subcellular location is the secreted. In terms of biological role, cecropins have lytic and antibacterial activity against several Gram-positive and Gram-negative bacteria. The sequence is that of Cecropin-A1 (CecA1) from Drosophila mauritiana (Fruit fly).